We begin with the raw amino-acid sequence, 478 residues long: Probable glycine dehydrogenase (decarboxylating) subunit 2 (478 aa).

N6-(pyridoxal phosphate)lysine is present on Lys264.

This sequence belongs to the GcvP family. C-terminal subunit subfamily. As to quaternary structure, the glycine cleavage system is composed of four proteins: P, T, L and H. In this organism, the P 'protein' is a heterodimer of two subunits. Pyridoxal 5'-phosphate is required as a cofactor.

The catalysed reaction is N(6)-[(R)-lipoyl]-L-lysyl-[glycine-cleavage complex H protein] + glycine + H(+) = N(6)-[(R)-S(8)-aminomethyldihydrolipoyl]-L-lysyl-[glycine-cleavage complex H protein] + CO2. Functionally, the glycine cleavage system catalyzes the degradation of glycine. The P protein binds the alpha-amino group of glycine through its pyridoxal phosphate cofactor; CO(2) is released and the remaining methylamine moiety is then transferred to the lipoamide cofactor of the H protein. The chain is Probable glycine dehydrogenase (decarboxylating) subunit 2 from Endomicrobium trichonymphae.